A 1764-amino-acid polypeptide reads, in one-letter code: Nucleolar pre-ribosomal-associated protein 1 (1764 aa).

The tract at residues 1-23 (MSNHSEAYGSRDQRREKYTQGKE) is disordered. The segment covering 9–23 (GSRDQRREKYTQGKE) has biased composition (basic and acidic residues).

As to quaternary structure, associates with pre-60S ribosomal particles. Predominantly associated with the 27SA2 pre-rRNA. Can associate with a subset of box H/ACA and box C/D small nucleolar RNPs (snoRNPs) required for peptidyl transferase center modification and with small RNAs snR37 and snR42. Interacts with URB2. Together with DBP6, NOP8, URB2 and RSA3, forms an RNA-independent complex, which is required during early maturation of nascent 60S ribosomal subunits.

The protein resides in the nucleus. It is found in the nucleolus. Required for 60S ribosomal subunit formation and pre-rRNA processing. Required for normal accumulation of 25S and 5.8S rRNAs. This is Nucleolar pre-ribosomal-associated protein 1 (URB1) from Saccharomyces cerevisiae (strain ATCC 204508 / S288c) (Baker's yeast).